We begin with the raw amino-acid sequence, 485 residues long: Glutamyl-tRNA(Gln) amidotransferase subunit A (485 aa).

Catalysis depends on charge relay system residues Lys79 and Ser154. Catalysis depends on Ser178, which acts as the Acyl-ester intermediate.

Belongs to the amidase family. GatA subfamily. Heterotrimer of A, B and C subunits.

The enzyme catalyses L-glutamyl-tRNA(Gln) + L-glutamine + ATP + H2O = L-glutaminyl-tRNA(Gln) + L-glutamate + ADP + phosphate + H(+). In terms of biological role, allows the formation of correctly charged Gln-tRNA(Gln) through the transamidation of misacylated Glu-tRNA(Gln) in organisms which lack glutaminyl-tRNA synthetase. The reaction takes place in the presence of glutamine and ATP through an activated gamma-phospho-Glu-tRNA(Gln). The protein is Glutamyl-tRNA(Gln) amidotransferase subunit A of Staphylococcus aureus (strain MRSA252).